Here is a 265-residue protein sequence, read N- to C-terminus: Gamma-secretase subunit APH-1A (265 aa).

Topologically, residues 1-2 (MG) are lumenal. A helical transmembrane segment spans residues 3–23 (AAVFFGCTFVAFGPAFSLFLI). Residues 24–31 (TVAGDPLR) are Cytoplasmic-facing. A helical transmembrane segment spans residues 32–52 (VIILVAGAFFWLVSLLLASVV). The Lumenal segment spans residues 53-68 (WFILVHVTDRSDARLQ). A helical transmembrane segment spans residues 69–89 (YGLLIFGAAVSVLLQEVFRFA). The Cytoplasmic portion of the chain corresponds to 90-118 (YYKLLKKADEGLASLSEDGRSPISIRQMA). Residues 119–139 (YVSGLSFGIISGVFSVINILA) form a helical membrane-spanning segment. Residues 140–158 (DALGPGVVGIHGDSPYYFL) lie on the Lumenal side of the membrane. Residues 159–179 (TSAFLTAAIILLHTFWGVVFF) traverse the membrane as a helical segment. Topologically, residues 180 to 186 (DACERRR) are cytoplasmic. Residues 187 to 207 (YWALGLVVGSHLLTSGLTFLN) form a helical membrane-spanning segment. Topologically, residues 208 to 213 (PWYEAS) are lumenal. The helical transmembrane segment at 214-234 (LLPIYAVTVSMGLWAFITAGG) threads the bilayer. Residues 235–265 (SLRSIQRSLSCRRQEDSRVMVYSALRIPPED) are Cytoplasmic-facing.

This sequence belongs to the APH-1 family. As to quaternary structure, the functional gamma-secretase complex is composed of at least four polypeptides: a presenilin homodimer (PSEN1 or PSEN2), nicastrin (NCSTN), APH1 (APH1A or APH1B) and PSENEN/PEN2.

Its subcellular location is the endoplasmic reticulum membrane. The protein localises to the golgi apparatus. It localises to the golgi stack membrane. Its function is as follows. Non-catalytic subunit of the gamma-secretase complex, an endoprotease complex that catalyzes the intramembrane cleavage of integral membrane proteins such as Notch receptors and APP (amyloid-beta precursor protein). Required for normal gamma-secretase assembly. The gamma-secretase complex plays a role in Notch and Wnt signaling cascades and regulation of downstream processes via its role in processing key regulatory proteins, and by regulating cytosolic CTNNB1 levels. This Mus musculus (Mouse) protein is Gamma-secretase subunit APH-1A (Aph1a).